Consider the following 97-residue polypeptide: Serine protease inhibitor Kazal-type 14 (97 aa).

Positions 1-21 (MAKSFPVFSLLSFILIHLVLS) are cleaved as a signal peptide. In terms of domain architecture, Kazal-like spans 34–97 (GIIKVKCPYE…RIRFYHDGKC (64 aa)). 3 cysteine pairs are disulfide-bonded: Cys40-Cys79, Cys57-Cys76, and Cys65-Cys97. Asn51 is a glycosylation site (N-linked (GlcNAc...) asparagine).

The protein localises to the secreted. Its function is as follows. May be a serine protease inhibitor. The protein is Serine protease inhibitor Kazal-type 14 (SPINK14) of Homo sapiens (Human).